The following is a 545-amino-acid chain: Chaperonin GroEL (545 aa).

ATP-binding positions include 30–33, Lys-51, 87–91, Gly-415, 479–481, and Asp-495; these read TLGP, DGTTT, and NAA. The interval 526 to 545 is disordered; the sequence is KDDAPAPAMPDMGGMGGMGM.

Belongs to the chaperonin (HSP60) family. In terms of assembly, forms a cylinder of 14 subunits composed of two heptameric rings stacked back-to-back. Interacts with the co-chaperonin GroES.

The protein localises to the cytoplasm. It catalyses the reaction ATP + H2O + a folded polypeptide = ADP + phosphate + an unfolded polypeptide.. In terms of biological role, together with its co-chaperonin GroES, plays an essential role in assisting protein folding. The GroEL-GroES system forms a nano-cage that allows encapsulation of the non-native substrate proteins and provides a physical environment optimized to promote and accelerate protein folding. This is Chaperonin GroEL from Paracidovorax citrulli (strain AAC00-1) (Acidovorax citrulli).